The following is a 216-amino-acid chain: Adenylate kinase (216 aa).

10 to 15 (GAGKGT) is an ATP binding site. Positions 30–59 (STGDMLRAAVKAGTPLGLELKKVMDAGQLV) are NMP. AMP contacts are provided by residues Thr-31, Arg-36, 57 to 59 (QLV), 85 to 88 (GFPR), and Gln-92. The tract at residues 122–159 (GRRVHLASGRTYHIQYNPPKVEGKDDVTGEDLIQRDDD) is LID. ATP contacts are provided by residues Arg-123 and 132–133 (TY). AMP is bound by residues Arg-156 and Arg-167. An ATP-binding site is contributed by Gly-202.

Belongs to the adenylate kinase family. Monomer.

It is found in the cytoplasm. The enzyme catalyses AMP + ATP = 2 ADP. It participates in purine metabolism; AMP biosynthesis via salvage pathway; AMP from ADP: step 1/1. Catalyzes the reversible transfer of the terminal phosphate group between ATP and AMP. Plays an important role in cellular energy homeostasis and in adenine nucleotide metabolism. This is Adenylate kinase from Pseudomonas putida (strain GB-1).